Consider the following 566-residue polypeptide: E3 ubiquitin-protein ligase RNF220 (566 aa).

A Glycyl lysine isopeptide (Lys-Gly) (interchain with G-Cter in SUMO2) cross-link involves residue Lys277. Residues 277-297 (KREGESPTASPHSSATDDLHH) are disordered. Ser390 carries the phosphoserine modification. Residues 485-513 (EDSAVTTFEALKARVRELERQLSRGDRYK) adopt a coiled-coil conformation. The required for targeting to the cytoplasm stretch occupies residues 514-522 (CLICMDSYS). The RING-type zinc finger occupies 514–553 (CLICMDSYSMPLTSIQCWHVHCEECWLRTLGAKKLCPQCY).

Interacts with SIN3B. Interacts with CTNNB1 (via Armadillo repeats 2-8). Interacts with USP7 (via MATH domain). Auto-ubiquitinated; leads to proteasomal degradation.

The protein resides in the cytoplasm. It catalyses the reaction S-ubiquitinyl-[E2 ubiquitin-conjugating enzyme]-L-cysteine + [acceptor protein]-L-lysine = [E2 ubiquitin-conjugating enzyme]-L-cysteine + N(6)-ubiquitinyl-[acceptor protein]-L-lysine.. It functions in the pathway protein modification; protein ubiquitination. Its function is as follows. E3 ubiquitin-protein ligase that promotes the ubiquitination and proteasomal degradation of SIN3B. Independently of its E3 ligase activity, acts as a CTNNB1 stabilizer through USP7-mediated deubiquitination of CTNNB1 promoting Wnt signaling. The protein is E3 ubiquitin-protein ligase RNF220 (RNF220) of Bos taurus (Bovine).